The following is a 680-amino-acid chain: Oligopeptidase A (680 aa).

Residue histidine 469 coordinates Zn(2+). Glutamate 470 is a catalytic residue. Histidine 473 and histidine 476 together coordinate Zn(2+).

The protein belongs to the peptidase M3 family. Zn(2+) is required as a cofactor.

It carries out the reaction Hydrolysis of oligopeptides, with broad specificity. Gly or Ala commonly occur as P1 or P1' residues, but more distant residues are also important, as is shown by the fact that Z-Gly-Pro-Gly-|-Gly-Pro-Ala is cleaved, but not Z-(Gly)(5).. In terms of biological role, may play a specific role in the degradation of signal peptides after they are released from precursor forms of secreted proteins. Can cleave N-acetyl-L-Ala(4). The chain is Oligopeptidase A (prlC) from Salmonella typhimurium (strain LT2 / SGSC1412 / ATCC 700720).